A 286-amino-acid polypeptide reads, in one-letter code: 4-diphosphocytidyl-2-C-methyl-D-erythritol kinase (286 aa).

Residue lysine 12 is part of the active site. 96–106 (PHGAGLGGGSA) serves as a coordination point for ATP. Aspartate 138 is a catalytic residue.

This sequence belongs to the GHMP kinase family. IspE subfamily.

The catalysed reaction is 4-CDP-2-C-methyl-D-erythritol + ATP = 4-CDP-2-C-methyl-D-erythritol 2-phosphate + ADP + H(+). It participates in isoprenoid biosynthesis; isopentenyl diphosphate biosynthesis via DXP pathway; isopentenyl diphosphate from 1-deoxy-D-xylulose 5-phosphate: step 3/6. Its function is as follows. Catalyzes the phosphorylation of the position 2 hydroxy group of 4-diphosphocytidyl-2C-methyl-D-erythritol. The protein is 4-diphosphocytidyl-2-C-methyl-D-erythritol kinase of Nitratidesulfovibrio vulgaris (strain ATCC 29579 / DSM 644 / CCUG 34227 / NCIMB 8303 / VKM B-1760 / Hildenborough) (Desulfovibrio vulgaris).